The following is a 753-amino-acid chain: Polyribonucleotide nucleotidyltransferase (753 aa).

Positions 488 and 494 each coordinate Mg(2+). Positions 555 to 614 (PKLYTMKINPEKIRDVIGKGGSTIRALTEETGTQIDIGEDGTITIASSDAAKADEAKRRI) constitute a KH domain. The S1 motif domain maps to 624-692 (GKIYEGPVTK…EKGRVKLSLK (69 aa)). Residues 692-753 (KALTERPAGM…EGEQQQQQQQ (62 aa)) form a disordered region. Basic and acidic residues predominate over residues 699 to 739 (AGMERSDRPAPAEREFRQPREPRQQREFREPREPREPRDGG).

Belongs to the polyribonucleotide nucleotidyltransferase family. The cofactor is Mg(2+).

Its subcellular location is the cytoplasm. It carries out the reaction RNA(n+1) + phosphate = RNA(n) + a ribonucleoside 5'-diphosphate. In terms of biological role, involved in mRNA degradation. Catalyzes the phosphorolysis of single-stranded polyribonucleotides processively in the 3'- to 5'-direction. The polypeptide is Polyribonucleotide nucleotidyltransferase (Delftia acidovorans (strain DSM 14801 / SPH-1)).